Here is a 221-residue protein sequence, read N- to C-terminus: Large ribosomal subunit protein uL16A (221 aa).

Belongs to the universal ribosomal protein uL16 family. As to quaternary structure, component of the large ribosomal subunit (LSU). Mature yeast ribosomes consist of a small (40S) and a large (60S) subunit. The 40S small subunit contains 1 molecule of ribosomal RNA (18S rRNA) and at least 33 different proteins. The large 60S subunit contains 3 rRNA molecules (25S, 5.8S and 5S rRNA) and at least 46 different proteins.

The protein localises to the cytoplasm. Its function is as follows. Component of the ribosome, a large ribonucleoprotein complex responsible for the synthesis of proteins in the cell. The small ribosomal subunit (SSU) binds messenger RNAs (mRNAs) and translates the encoded message by selecting cognate aminoacyl-transfer RNA (tRNA) molecules. The large subunit (LSU) contains the ribosomal catalytic site termed the peptidyl transferase center (PTC), which catalyzes the formation of peptide bonds, thereby polymerizing the amino acids delivered by tRNAs into a polypeptide chain. The nascent polypeptides leave the ribosome through a tunnel in the LSU and interact with protein factors that function in enzymatic processing, targeting, and the membrane insertion of nascent chains at the exit of the ribosomal tunnel. This Schizosaccharomyces pombe (strain 972 / ATCC 24843) (Fission yeast) protein is Large ribosomal subunit protein uL16A (rpl1001).